A 69-amino-acid chain; its full sequence is Conotoxin Eb6.21 (69 aa).

Residues 1-17 (VLIIAVLFLTACQLTTA) form the signal peptide. Positions 18-41 (ETYSRGRQKHRARRSTDKNSKWTR) are excised as a propeptide. 3 disulfide bridges follow: C43/C57, C50/C61, and C56/C68.

Belongs to the conotoxin O1 superfamily. Expressed by the venom duct.

The protein resides in the secreted. The sequence is that of Conotoxin Eb6.21 (E1) from Conus ebraeus (Hebrew cone).